Here is a 338-residue protein sequence, read N- to C-terminus: Fructose-1,6-bisphosphatase class 1 (338 aa).

Residues Glu-92, Asp-115, Leu-117, and Asp-118 each contribute to the Mg(2+) site. Residues Asp-118 to Ser-121, Asn-211, Tyr-244, Tyr-262 to Tyr-264, and Lys-274 contribute to the substrate site. Glu-280 provides a ligand contact to Mg(2+).

It belongs to the FBPase class 1 family. Homotetramer. Requires Mg(2+) as cofactor.

It is found in the cytoplasm. The catalysed reaction is beta-D-fructose 1,6-bisphosphate + H2O = beta-D-fructose 6-phosphate + phosphate. It participates in carbohydrate biosynthesis; gluconeogenesis. This Vibrio parahaemolyticus serotype O3:K6 (strain RIMD 2210633) protein is Fructose-1,6-bisphosphatase class 1.